We begin with the raw amino-acid sequence, 360 residues long: MPLSRLIINNFRNLQSLDLELSPNFNFIVGHNGSGKTSLLEAIFYLGHGRSFKSHISNRIIHYQAEDFVLHARIDEGQHQWSVGIQKKRSGDTLLKINGEDGNKISDLAHLLPMQVITPEGLTLLNGGPTFRRAFLDWGLFHQYTEFYSCWANLKRLLKQRNAALHQVRSYAELKPWDIELAKLAEIVSQMRASYAEALRPEIEKTCQFFLPELEIGVSFHQGWEKGTDYAEILAQGFERDKAMGYTMIGPQKADFRFRANGLPVEDVLSRGQLKLLMCVLRLAQGEYLVAQKERQCLFLIDDFASELDPIKRELLAHRLRESGSQVFVTAITKDQLNQMQWQESEQDSLFQVQQGMLTK.

30–37 contributes to the ATP binding site; it reads GHNGSGKT.

Belongs to the RecF family.

The protein resides in the cytoplasm. Functionally, the RecF protein is involved in DNA metabolism; it is required for DNA replication and normal SOS inducibility. RecF binds preferentially to single-stranded, linear DNA. It also seems to bind ATP. The polypeptide is DNA replication and repair protein RecF (Actinobacillus pleuropneumoniae serotype 7 (strain AP76)).